Consider the following 435-residue polypeptide: Apparent malate synthase (435 aa).

Mg(2+) is bound by residues Glu-159 and Asn-180. Glu-159 serves as a coordination point for substrate.

The protein belongs to the HpcH/HpaI aldolase family. Requires Mg(2+) as cofactor. Mn(2+) serves as cofactor. Co(2+) is required as a cofactor. The cofactor is Ca(2+).

It catalyses the reaction (S)-malyl-CoA = glyoxylate + acetyl-CoA. The enzyme catalyses (S)-malyl-CoA + H2O = (S)-malate + CoA + H(+). In terms of biological role, involved in the methylaspartate cycle. Catalyzes the biosynthesis of malate in two steps. In the first reaction acetyl-CoA is condensed reversibly with glyoxylate to form (S)-malyl-CoA. In the second reaction (S)-malyl-CoA is hydrolyzed to malate and CoA. It can also catalyze the condensation of propionyl-CoA with glyoxylate and of acetyl-CoA with pyruvate, however the CoA-ester hydrolysis reaction is highly specific for (S)-malyl-CoA. This chain is Apparent malate synthase (aceB), found in Haloarcula marismortui (strain ATCC 43049 / DSM 3752 / JCM 8966 / VKM B-1809) (Halobacterium marismortui).